Consider the following 320-residue polypeptide: NADH-ubiquinone oxidoreductase chain 1 (320 aa).

A run of 8 helical transmembrane segments spans residues leucine 3–leucine 23, isoleucine 72–isoleucine 92, leucine 103–glycine 123, valine 147–leucine 167, histidine 174–alanine 194, phenylalanine 226–isoleucine 246, glutamate 255–isoleucine 275, and phenylalanine 295–glycine 315.

It belongs to the complex I subunit 1 family.

Its subcellular location is the mitochondrion inner membrane. It catalyses the reaction a ubiquinone + NADH + 5 H(+)(in) = a ubiquinol + NAD(+) + 4 H(+)(out). Its function is as follows. Core subunit of the mitochondrial membrane respiratory chain NADH dehydrogenase (Complex I) that is believed to belong to the minimal assembly required for catalysis. Complex I functions in the transfer of electrons from NADH to the respiratory chain. The immediate electron acceptor for the enzyme is believed to be ubiquinone. This Varanus jobiensis (Peach throat monitor) protein is NADH-ubiquinone oxidoreductase chain 1 (MT-ND1).